The sequence spans 1513 residues: Protein tincar (1513 aa).

Residues 1–77 (MGGKHQGSGA…DSGSYLHLNS (77 aa)) lie on the Cytoplasmic side of the membrane. The chain crosses the membrane as a helical span at residues 78-98 (LWSIWYGVMLTLFQGYLAMHG). Topologically, residues 99 to 120 (AYRFLGCSLIPWKIEPVAELNL) are extracellular. A helical transmembrane segment spans residues 121-141 (QIVLSGVVFILLPVFFTSAVF). Residues 142-181 (KVGNLANDGIKLATGARERRCTLSPHDGLEEESRGGTLRA) are Cytoplasmic-facing. Residues 182–202 (LWTHGGPTAAFVHIVIALCLL) form a helical membrane-spanning segment. Topologically, residues 203–668 (LPRLLLEARI…VAIFSQPPSA (466 aa)) are extracellular. Disordered regions lie at residues 247–266 (TPFP…HQHG), 354–373 (ERQE…DEGV), and 383–532 (MPDF…SIHR). The segment covering 427–466 (ASSSSSSTTSTTTTTTTSTTTTAATTTSTRGTSTTTTTTT) has biased composition (low complexity). Residues 478–507 (SAHHHHGKSRKHHKHHNKQRQQQPPRRHHV) are compositionally biased toward basic residues. The span at 523 to 532 (TTTRDSSIHR) shows a compositional bias: basic and acidic residues. A helical transmembrane segment spans residues 669–689 (EFVNLLCALLVWSVRYPAVFW). Over 690–696 (NTSKAFA) the chain is Cytoplasmic. Residues 697–717 (CVFSLQMVVAALDIILGYVGI) traverse the membrane as a helical segment. Over 718 to 736 (SNLYKLQIYAEAMPVHQPG) the chain is Extracellular. The helical transmembrane segment at 737–757 (LILNAVVTLALYLLSTALVLA) threads the bilayer. Residues 758–787 (SSMVMYLYGHGRLATRMRDRSIITLKTHQT) are Cytoplasmic-facing. Residues 788–808 (WIYFAHCASLCFVLALAVVKA) traverse the membrane as a helical segment. The Extracellular portion of the chain corresponds to 809 to 826 (PLLNDLSATYKNNLHCPT). Residues 827 to 847 (FLAALVGVTHLLLWIVIWLCL) traverse the membrane as a helical segment. Residues 848–1513 (TIKRRWHFKL…CGLYVTAQLH (666 aa)) are Cytoplasmic-facing. Composition is skewed to low complexity over residues 879 to 903 (SSGQ…VNGG) and 1060 to 1071 (QQQQQQQQQQRQ). 5 disordered regions span residues 879 to 913 (SSGQ…MSTA), 1045 to 1090 (EYDE…SGLG), 1115 to 1155 (ASTS…HSAG), 1173 to 1214 (EHHH…PHQH), and 1231 to 1335 (AHIA…DPAA). The span at 1122–1149 (PPQPSAQAPPPPPPLPIKGAPVPQPPAV) shows a compositional bias: pro residues. 2 stretches are compositionally biased toward low complexity: residues 1179–1208 (LQHS…LQQQ) and 1255–1285 (TPRS…SGVH). A compositionally biased stretch (basic and acidic residues) spans 1286-1296 (SGEERELEVII). The span at 1303–1314 (KPPPRPPQPPIQ) shows a compositional bias: pro residues. A compositionally biased stretch (polar residues) spans 1324–1335 (MRMSSFNADPAA).

As to expression, expression varies in tissues throughout development. At stage 5, expressed in the embryo dorsal region followed by expression in a striped pattern at stage 6. During gastrulation, expressed in ventral region and ventral nerve cord. Also detected in many neurons in the externa sensilla and chordotonal organ. At stage 16, expressed on the surface of the midgut. Additionally, expressed in a subset of cardioblasts (Tin+ subpopulation) during dorsal vessel formation. In third-instar larval tissues, expressed in the eye and antennal disks. In the antennal disks, expressed in the second antennal segments. In the eye disks, strongest expression found in the ocelli, and in the differentiating ommatidial cells. Also expressed in all cells within and in the vicinity of the morphogenetic furrow.

It localises to the membrane. In terms of biological role, involved in eye morphogenesis. May be essential for the normal differentiation of ommatidial cells. The sequence is that of Protein tincar (tinc) from Drosophila melanogaster (Fruit fly).